Consider the following 640-residue polypeptide: Asparagine synthetase domain-containing protein 1 (640 aa).

C2 serves as the catalytic For GATase activity. The Glutamine amidotransferase type-2 domain occupies 2 to 184 (CGICCAVSFS…ASGIFRIDLK (183 aa)). Residues 286–602 (QFIGVLSTAV…GLTASALLPK (317 aa)) form the Asparagine synthetase domain.

This Bos taurus (Bovine) protein is Asparagine synthetase domain-containing protein 1 (ASNSD1).